A 224-amino-acid polypeptide reads, in one-letter code: MAQKEEAAAAAEPASQNGEEVENLEDPEKLKELIELPPFEIVTGERLPAHYFKFQFRNVEYSSGRNKTFLCYVVEAQSKGGQVQASRGYLEDEHATNHAEEAFFNSIMPTFDPALRYMVTWYVSSSPCAACADRIVKTLNKTKNLRLLILVGRLFMWEEPEIQAALRKLKEAGCRLRIMKPQDFEYIWQNFVEQEEGESKAFEPWEDIQENFLYYEEKLADILK.

A disordered region spans residues 1-25 (MAQKEEAAAAAEPASQNGEEVENLE). Residues glutamate 60 and histidine 98 each contribute to the Zn(2+) site. In terms of domain architecture, CMP/dCMP-type deaminase spans 64–169 (GRNKTFLCYV…PEIQAALRKL (106 aa)). The active-site Proton donor is glutamate 100. Cysteine 128 and cysteine 131 together coordinate Zn(2+).

This sequence belongs to the cytidine and deoxycytidylate deaminase family. In terms of assembly, homotetramer. It depends on Zn(2+) as a cofactor.

The enzyme catalyses cytidine(6666) in apoB mRNA + H2O + H(+) = uridine(6666) in apoB mRNA + NH4(+). Probable C to U editing enzyme whose physiological substrate is not yet known. Does not display detectable apoB mRNA editing. Has a low intrinsic cytidine deaminase activity. May play a role in the epigenetic regulation of gene expression through the process of active DNA demethylation. The protein is Probable C-&gt;U-editing enzyme APOBEC-2 (APOBEC2) of Bos taurus (Bovine).